We begin with the raw amino-acid sequence, 726 residues long: Serine/threonine-protein kinase PKH3 (726 aa).

In terms of domain architecture, Protein kinase spans 10–271; sequence FLFREELGHG…LEQIKKHKWF (262 aa). ATP is bound by residues 16-24 and Lys-39; that span reads LGHGSYSTV. The active-site Proton acceptor is Asp-136. Residues 629 to 679 form a disordered region; it reads QDIPLPSPAKSSSNSGVSEPISKIPPRQLVSASEQSHKAKSEAHTKKANSY. Basic and acidic residues predominate over residues 663 to 673; it reads QSHKAKSEAHT.

It belongs to the protein kinase superfamily. Ser/Thr protein kinase family.

The enzyme catalyses L-seryl-[protein] + ATP = O-phospho-L-seryl-[protein] + ADP + H(+). It carries out the reaction L-threonyl-[protein] + ATP = O-phospho-L-threonyl-[protein] + ADP + H(+). Its function is as follows. Serine/threonine-protein kinase. The chain is Serine/threonine-protein kinase PKH3 (PKH3) from Eremothecium gossypii (strain ATCC 10895 / CBS 109.51 / FGSC 9923 / NRRL Y-1056) (Yeast).